A 239-amino-acid chain; its full sequence is Pyridoxine 5'-phosphate synthase (239 aa).

Residue Asn-7 coordinates 3-amino-2-oxopropyl phosphate. 9–10 (DH) lines the 1-deoxy-D-xylulose 5-phosphate pocket. Arg-18 serves as a coordination point for 3-amino-2-oxopropyl phosphate. The active-site Proton acceptor is His-43. The 1-deoxy-D-xylulose 5-phosphate site is built by Arg-45 and His-50. Glu-70 serves as the catalytic Proton acceptor. Residue Thr-100 participates in 1-deoxy-D-xylulose 5-phosphate binding. The active-site Proton donor is the His-191. Residues Gly-192 and 213–214 (GH) contribute to the 3-amino-2-oxopropyl phosphate site.

Belongs to the PNP synthase family. As to quaternary structure, homooctamer; tetramer of dimers.

It localises to the cytoplasm. It catalyses the reaction 3-amino-2-oxopropyl phosphate + 1-deoxy-D-xylulose 5-phosphate = pyridoxine 5'-phosphate + phosphate + 2 H2O + H(+). It functions in the pathway cofactor biosynthesis; pyridoxine 5'-phosphate biosynthesis; pyridoxine 5'-phosphate from D-erythrose 4-phosphate: step 5/5. In terms of biological role, catalyzes the complicated ring closure reaction between the two acyclic compounds 1-deoxy-D-xylulose-5-phosphate (DXP) and 3-amino-2-oxopropyl phosphate (1-amino-acetone-3-phosphate or AAP) to form pyridoxine 5'-phosphate (PNP) and inorganic phosphate. The chain is Pyridoxine 5'-phosphate synthase from Geotalea daltonii (strain DSM 22248 / JCM 15807 / FRC-32) (Geobacter daltonii).